Consider the following 125-residue polypeptide: Large ribosomal subunit protein eL32 (125 aa).

This sequence belongs to the eukaryotic ribosomal protein eL32 family.

The protein is Large ribosomal subunit protein eL32 (rpl32e) of Sulfolobus acidocaldarius (strain ATCC 33909 / DSM 639 / JCM 8929 / NBRC 15157 / NCIMB 11770).